We begin with the raw amino-acid sequence, 531 residues long: Peptide chain release factor 3 (531 aa).

The tr-type G domain maps to R10–K278. Residues S19–T26, D87–H91, and N141–D144 each bind GTP.

Belongs to the TRAFAC class translation factor GTPase superfamily. Classic translation factor GTPase family. PrfC subfamily.

It is found in the cytoplasm. Its function is as follows. Increases the formation of ribosomal termination complexes and stimulates activities of RF-1 and RF-2. It binds guanine nucleotides and has strong preference for UGA stop codons. It may interact directly with the ribosome. The stimulation of RF-1 and RF-2 is significantly reduced by GTP and GDP, but not by GMP. In Neisseria gonorrhoeae (strain NCCP11945), this protein is Peptide chain release factor 3.